The sequence spans 78 residues: Antitoxin VapB2 (78 aa).

Residues 4-44 enclose the SpoVT-AbrB domain; the sequence is AKIFMNGQSQAVRLPKEFRFSVKEVSVIPLGKGIVLQPLPN.

It belongs to the VapB family. As to quaternary structure, forms complexes with VapC2; probably VapC2(4):VapB2(2) in the absence of DNA, and VapC2(4):VapB2(4) in the presence of DNA. Crystallizes as heterodimers with stoichiometry VapC2(4):VapB2(4) in the presence of its probable promoter DNA. The heterodimers are in contact via alternative VapC-VapC and VapB-VapB interactions. This subunit contacts DNA.

Antitoxin component of a type II toxin-antitoxin (TA) system. Upon expression in E.coli or S.cerevisiae neutralizes the effect of cognate toxin VapC2, partially inhibits the RNase activity of VapC2. The protein is Antitoxin VapB2 (vapB2) of Rickettsia felis (strain ATCC VR-1525 / URRWXCal2) (Rickettsia azadi).